Reading from the N-terminus, the 311-residue chain is Ketoisovalerate oxidoreductase subunit VorB (311 aa).

Heterotetramer of one alpha, one beta, one delta and one gamma chain.

It carries out the reaction 3-methyl-2-oxobutanoate + 2 oxidized [2Fe-2S]-[ferredoxin] + CoA = 2-methylpropanoyl-CoA + 2 reduced [2Fe-2S]-[ferredoxin] + CO2 + H(+). This Pyrococcus furiosus (strain ATCC 43587 / DSM 3638 / JCM 8422 / Vc1) protein is Ketoisovalerate oxidoreductase subunit VorB (vorB).